The chain runs to 203 residues: Ribosome hibernation promotion factor (203 aa).

The protein belongs to the HPF/YfiA ribosome-associated protein family. Long HPF subfamily. As to quaternary structure, interacts with 100S ribosomes.

It localises to the cytoplasm. Its function is as follows. Required for dimerization of active 70S ribosomes into 100S ribosomes in stationary phase; 100S ribosomes are translationally inactive and sometimes present during exponential growth. This Bradyrhizobium diazoefficiens (strain JCM 10833 / BCRC 13528 / IAM 13628 / NBRC 14792 / USDA 110) protein is Ribosome hibernation promotion factor.